The sequence spans 694 residues: Rabphilin-3A (694 aa).

Residues 1–12 (MTDTVFSNSSNR) show a composition bias toward polar residues. Residues 1-51 (MTDTVFSNSSNRWMYPSDRPLQSNDKEQLQAGWSVHPGGQPDRQRKQEELT) form a disordered region. The region spanning 44 to 160 (QRKQEELTDE…KRSGAWFFKG (117 aa)) is the RabBD domain. The FYVE-type zinc finger occupies 92–148 (GDGVNRCILCGEQLGMLGSACVVCEDCKKNVCTKCGVETNNRLHSVWLCKICIEQRE). Positions 98, 101, 115, 118, 123, 126, 140, and 143 each coordinate Zn(2+). A disordered region spans residues 166 to 388 (LPQPMPIKKT…EEEANSYDSD (223 aa)). Residues 177-186 (PQQPVSEPAA) show a composition bias toward low complexity. Basic and acidic residues predominate over residues 202-211 (ARGDSEDRRG). Omega-N-methylarginine is present on Arg226. A Phosphoserine modification is found at Ser272. The span at 352-370 (PSGPYSQASAAAPQPAAAR) shows a compositional bias: low complexity. The segment covering 375–388 (PEEEEEEANSYDSD) has biased composition (acidic residues). The 123-residue stretch at 392 to 514 (TLGALEFSLL…KPNQRKNFNI (123 aa)) folds into the C2 1 domain. Residues Met422, Asp423, Asp429, Asp484, Glu485, Asp486, Glu492, Glu539, Asp581, Asp587, Asp641, Tyr642, Asp643, and Asp649 each contribute to the Ca(2+) site. Residues 550–683 (ERGKILVSLM…NKDKKIERWH (134 aa)) enclose the C2 2 domain. Ser692 and Ser693 each carry phosphoserine.

Interacts with RAB3B, RAB3C, RAB3D, RAB8A, RAB27A and RAB27B. Interacts with RAB3A; this interaction recruits RPH3A to synaptic vesicules. Interacts (via C2B domain) with SNAP25. Interacts with deubiquitinating enzyme CAND1; this interaction results in the deubiquitination of RPH3A. Interacts with GRIN2A and DLG4; this ternary complex regulates NMDA receptor composition at postsynaptic membranes. Interacts with SNCA. Ca(2+) serves as cofactor. Post-translationally, ubiquitinated. Deubiquitinated by CAND1 to prevent its degradation.

It localises to the cytoplasmic vesicle. Its subcellular location is the secretory vesicle. It is found in the synaptic vesicle membrane. The protein resides in the cell projection. The protein localises to the dendritic spine. It localises to the postsynaptic cell membrane. Its subcellular location is the membrane. Functionally, plays an essential role in docking and fusion steps of regulated exocytosis. At the presynaptic level, RPH3A is recruited by RAB3A to the synaptic vesicle membrane in a GTP-dependent manner where it modulates synaptic vesicle trafficking and calcium-triggered neurotransmitter release. In the post-synaptic compartment, forms a ternary complex with GRIN2A and DLG4 and regulates NMDA receptor stability. Also plays a role in the exocytosis of arginine vasopressin hormone. This Homo sapiens (Human) protein is Rabphilin-3A (RPH3A).